We begin with the raw amino-acid sequence, 429 residues long: Histidine--tRNA ligase (429 aa).

It belongs to the class-II aminoacyl-tRNA synthetase family. Homodimer.

It is found in the cytoplasm. It carries out the reaction tRNA(His) + L-histidine + ATP = L-histidyl-tRNA(His) + AMP + diphosphate + H(+). This Dechloromonas aromatica (strain RCB) protein is Histidine--tRNA ligase.